The sequence spans 193 residues: Penicillin-binding protein activator LpoB (193 aa).

An N-terminal signal peptide occupies residues 1-16 (MKKMLFVVAAVFLLAG). Residue cysteine 17 is the site of N-palmitoyl cysteine attachment. Cysteine 17 carries the S-diacylglycerol cysteine lipid modification. Residues 23 to 50 (QQPPAPVEPVTPTEPTEPPKPIEPPIEV) are disordered. Over residues 37–46 (PTEPPKPIEP) the composition is skewed to pro residues.

This sequence belongs to the LpoB family. Interacts with PBP1b.

It is found in the cell outer membrane. Functionally, regulator of peptidoglycan synthesis that is essential for the function of penicillin-binding protein 1B (PBP1b). The protein is Penicillin-binding protein activator LpoB of Proteus mirabilis (strain HI4320).